Reading from the N-terminus, the 264-residue chain is Phosphonoacetaldehyde hydrolase (264 aa).

D9 serves as the catalytic Nucleophile. D9 and A11 together coordinate Mg(2+). Residue K50 is the Schiff-base intermediate with substrate of the active site. Position 183 (D183) interacts with Mg(2+).

Belongs to the HAD-like hydrolase superfamily. PhnX family. As to quaternary structure, homodimer. Requires Mg(2+) as cofactor.

The enzyme catalyses phosphonoacetaldehyde + H2O = acetaldehyde + phosphate + H(+). Functionally, involved in phosphonate degradation. The polypeptide is Phosphonoacetaldehyde hydrolase (Bacillus cereus (strain ATCC 14579 / DSM 31 / CCUG 7414 / JCM 2152 / NBRC 15305 / NCIMB 9373 / NCTC 2599 / NRRL B-3711)).